The following is a 987-amino-acid chain: Ephrin type-B receptor 4 (987 aa).

A signal peptide spans 1 to 15 (MELRALLCWASLATA). Topologically, residues 16-539 (LEETLLNTKL…ESESWREQLA (524 aa)) are extracellular. Residues 17-202 (EETLLNTKLE…FYKKCSWLIT (186 aa)) enclose the Eph LBD domain. 2 disulfide bridges follow: Cys-61/Cys-184 and Cys-97/Cys-107. N-linked (GlcNAc...) asparagine glycans are attached at residues Asn-203, Asn-335, and Asn-426. Fibronectin type-III domains lie at 323–432 (PPSA…TDRE) and 436–529 (AVSD…TQLD). A helical transmembrane segment spans residues 540 to 560 (LIAGTAVVGVVLVLVVVIIAV). At 561 to 987 (LCLRKQSNGR…GGTGGPAQQF (427 aa)) the chain is on the cytoplasmic side. A Protein kinase domain is found at 615–899 (VKIEEVIGAG…ENGGASHPLL (285 aa)). Residues 621–629 (IGAGEFGEV) and Lys-647 contribute to the ATP site. The active-site Proton acceptor is Asp-740. Phosphoserine occurs at positions 769, 770, 911, and 943. An SAM domain is found at 907 to 971 (SAFGSVGEWL…LASVQHMKSQ (65 aa)). The segment at 965–987 (VQHMKSQAKPGAPGGTGGPAQQF) is disordered. Residues 976–987 (APGGTGGPAQQF) show a composition bias toward gly residues. A PDZ-binding motif is present at residues 985–987 (QQF).

The protein belongs to the protein kinase superfamily. Tyr protein kinase family. Ephrin receptor subfamily. As to quaternary structure, heterotetramer upon binding of the ligand. The heterotetramer is composed of an ephrin dimer and a receptor dimer. Oligomerization is probably required to induce biological responses. Interacts with RASA1; the interaction depends on EPHB4 tyrosine-phosphorylation. In terms of processing, phosphorylated; autophosphorylation is stimulated by EFNB2. Expressed in various organ systems, including lung, liver, kidney, intestine, muscle and heart. Expressed in myogenic progenitor cells.

It localises to the cell membrane. It catalyses the reaction L-tyrosyl-[protein] + ATP = O-phospho-L-tyrosyl-[protein] + ADP + H(+). Its function is as follows. Receptor tyrosine kinase which binds promiscuously transmembrane ephrin-B family ligands residing on adjacent cells, leading to contact-dependent bidirectional signaling into neighboring cells. The signaling pathway downstream of the receptor is referred to as forward signaling while the signaling pathway downstream of the ephrin ligand is referred to as reverse signaling. Together with its cognate ligand/functional ligand EFNB2 it is involved in the regulation of cell adhesion and migration, and plays a central role in heart morphogenesis, angiogenesis and blood vessel remodeling and permeability. EPHB4-mediated forward signaling controls cellular repulsion and segregation from EFNB2-expressing cells. The chain is Ephrin type-B receptor 4 (Ephb4) from Mus musculus (Mouse).